The chain runs to 186 residues: Inner membrane-spanning protein YciB (186 aa).

A run of 6 helical transmembrane segments spans residues phenylalanine 3 to tyrosine 23, valine 24 to histidine 44, alanine 49 to histidine 69, tryptophan 76 to leucine 96, leucine 121 to phenylalanine 141, and phenylalanine 149 to leucine 169.

Belongs to the YciB family.

Its subcellular location is the cell inner membrane. Functionally, plays a role in cell envelope biogenesis, maintenance of cell envelope integrity and membrane homeostasis. This is Inner membrane-spanning protein YciB from Ralstonia nicotianae (strain ATCC BAA-1114 / GMI1000) (Ralstonia solanacearum).